A 35-amino-acid chain; its full sequence is MRRVKLLCTALMLLASHGALAVSYPLPPEGSRLVG.

Residues 1–21 (MRRVKLLCTALMLLASHGALA) form the signal peptide.

The protein belongs to the YkuD family.

Its subcellular location is the periplasm. The protein operates within cell wall biogenesis; peptidoglycan biosynthesis. The polypeptide is Probable L,D-transpeptidase ErfK/SrfK (erfK) (Klebsiella aerogenes (Enterobacter aerogenes)).